The sequence spans 247 residues: Small ribosomal subunit protein uS3 (247 aa).

Residues 39-111 enclose the KH type-2 domain; the sequence is IYDFFDKKVR…NISIQVIELK (73 aa). A disordered region spans residues 221 to 247; that stretch reads EEMDLLNAPKDRRVRRGGERHASTKKN. A compositionally biased stretch (basic and acidic residues) spans 236-247; it reads RGGERHASTKKN.

This sequence belongs to the universal ribosomal protein uS3 family. Part of the 30S ribosomal subunit. Forms a tight complex with proteins S10 and S14.

Its function is as follows. Binds the lower part of the 30S subunit head. Binds mRNA in the 70S ribosome, positioning it for translation. This Metamycoplasma arthritidis (strain 158L3-1) (Mycoplasma arthritidis) protein is Small ribosomal subunit protein uS3.